The primary structure comprises 273 residues: 3-methyl-2-oxobutanoate hydroxymethyltransferase (273 aa).

Mg(2+) contacts are provided by Asp-49 and Asp-88. Residues 49 to 50 (DS), Asp-88, and Lys-118 each bind 3-methyl-2-oxobutanoate. Glu-120 is a Mg(2+) binding site. Glu-187 serves as the catalytic Proton acceptor.

Belongs to the PanB family. Homodecamer; pentamer of dimers. Mg(2+) serves as cofactor.

The protein localises to the cytoplasm. The enzyme catalyses 3-methyl-2-oxobutanoate + (6R)-5,10-methylene-5,6,7,8-tetrahydrofolate + H2O = 2-dehydropantoate + (6S)-5,6,7,8-tetrahydrofolate. The protein operates within cofactor biosynthesis; (R)-pantothenate biosynthesis; (R)-pantoate from 3-methyl-2-oxobutanoate: step 1/2. Its function is as follows. Catalyzes the reversible reaction in which hydroxymethyl group from 5,10-methylenetetrahydrofolate is transferred onto alpha-ketoisovalerate to form ketopantoate. The chain is 3-methyl-2-oxobutanoate hydroxymethyltransferase from Rhizobium rhizogenes (strain K84 / ATCC BAA-868) (Agrobacterium radiobacter).